We begin with the raw amino-acid sequence, 485 residues long: Expansin-like protein 8 (485 aa).

The first 21 residues, 1–21 (MRISIILLSLLFLSLHSLIKA), serve as a signal peptide directing secretion. Topologically, residues 22–464 (DITKLSVCGS…QSGHHASSNT (443 aa)) are extracellular. In terms of domain architecture, Expansin-like EG45 spans 26-139 (LSVCGSARAV…QIVSCGYSGN (114 aa)). 2 disulfides stabilise this stretch: cysteine 29/cysteine 70 and cysteine 73/cysteine 134. 2 N-linked (GlcNAc...) asparagine glycosylation sites follow: asparagine 117 and asparagine 365. The interval 408–436 (EVNNKPSTTSGTGTTSSKPSSSSGGVSGG) is disordered. Over residues 414 to 431 (STTSGTGTTSSKPSSSSG) the composition is skewed to low complexity. The N-linked (GlcNAc...) asparagine glycan is linked to asparagine 454. The chain crosses the membrane as a helical span at residues 465–485 (NILLPTTFVFFISITILSLLF).

It belongs to the expansin family. Expansin A subfamily.

The protein localises to the membrane. In terms of biological role, may serve to lubricate the movement of the cellulose microfibrils during cell growth and wall extension and/or may serve to maintain the fluid state of the slug cell wall. The polypeptide is Expansin-like protein 8 (expl8) (Dictyostelium discoideum (Social amoeba)).